The primary structure comprises 540 residues: Extracellular matrix protein 1 (540 aa).

The first 19 residues, 1–19 (MGTTARAALVLTYLAVASA), serve as a signal peptide directing secretion. Disordered regions lie at residues 41-85 (VGYA…EATP) and 120-175 (LQHP…PSPD). Polar residues-rich tracts occupy residues 71 to 85 (GQSQ…EATP) and 146 to 156 (NAAQHCQQDRS). 2 repeat units span residues 150–279 (HCQQ…QPHY) and 283–405 (ACPS…YPNY). The segment at 150–405 (HCQQDRSQGG…FARRAPYPNY (256 aa)) is 2 X approximate repeats. Asparagine 354 is a glycosylation site (N-linked (GlcNAc...) asparagine). A glycan (N-linked (GlcNAc...) (complex) asparagine) is linked at asparagine 444. The disordered stretch occupies residues 515–540 (ENAKGQGEQGSTGGTNISSTSEPKEE). Residues 528–540 (GTNISSTSEPKEE) show a composition bias toward low complexity. Asparagine 530 carries an N-linked (GlcNAc...) asparagine glycan.

As to quaternary structure, interacts (via C-terminus) with HSPG2 (via C-terminus). Interacts with EFEMP1/FBLN3 and LAMB3. Interacts with MMP9. As to expression, expressed in breast cancer tissues. Little or no expression observed in normal breast tissues. Expressed in skin; wide expression is observed throughout the dermis with minimal expression in the epidermis.

The protein localises to the secreted. Its subcellular location is the extracellular space. It is found in the extracellular matrix. Involved in endochondral bone formation as negative regulator of bone mineralization. Stimulates the proliferation of endothelial cells and promotes angiogenesis. Inhibits MMP9 proteolytic activity. The protein is Extracellular matrix protein 1 (ECM1) of Homo sapiens (Human).